Consider the following 453-residue polypeptide: Allantoinase (453 aa).

Residues histidine 59, histidine 61, lysine 146, histidine 186, histidine 242, and aspartate 315 each contribute to the Zn(2+) site. The residue at position 146 (lysine 146) is an N6-carboxylysine.

Belongs to the metallo-dependent hydrolases superfamily. Allantoinase family. Homotetramer. Requires Zn(2+) as cofactor. Post-translationally, carboxylation allows a single lysine to coordinate two zinc ions.

The enzyme catalyses (S)-allantoin + H2O = allantoate + H(+). The protein operates within nitrogen metabolism; (S)-allantoin degradation; allantoate from (S)-allantoin: step 1/1. Functionally, catalyzes the conversion of allantoin (5-ureidohydantoin) to allantoic acid by hydrolytic cleavage of the five-member hydantoin ring. The polypeptide is Allantoinase (Salmonella choleraesuis (strain SC-B67)).